The following is a 297-amino-acid chain: N-acetylneuraminate lyase (297 aa).

2 residues coordinate aceneuramate: serine 47 and threonine 48. Tyrosine 137 serves as the catalytic Proton donor. Lysine 165 functions as the Schiff-base intermediate with substrate in the catalytic mechanism. Aceneuramate is bound by residues threonine 167, glycine 189, aspartate 191, glutamate 192, and serine 208.

The protein belongs to the DapA family. NanA subfamily. In terms of assembly, homotetramer.

Its subcellular location is the cytoplasm. The catalysed reaction is aceneuramate = aldehydo-N-acetyl-D-mannosamine + pyruvate. Its pathway is amino-sugar metabolism; N-acetylneuraminate degradation; D-fructose 6-phosphate from N-acetylneuraminate: step 1/5. Its function is as follows. Catalyzes the reversible aldol cleavage of N-acetylneuraminic acid (sialic acid; Neu5Ac) to form pyruvate and N-acetylmannosamine (ManNAc) via a Schiff base intermediate. The chain is N-acetylneuraminate lyase from Escherichia coli (strain SMS-3-5 / SECEC).